A 294-amino-acid polypeptide reads, in one-letter code: Cytidine deaminase (294 aa).

CMP/dCMP-type deaminase domains are found at residues 48–168 (DEDA…FGPK) and 186–294 (LTGD…VLLG). Residue 89-91 (NME) coordinates substrate. His-102 provides a ligand contact to Zn(2+). Residue Glu-104 is the Proton donor of the active site. Residues Cys-129 and Cys-132 each contribute to the Zn(2+) site.

The protein belongs to the cytidine and deoxycytidylate deaminase family. Homodimer. Zn(2+) is required as a cofactor.

It catalyses the reaction cytidine + H2O + H(+) = uridine + NH4(+). The enzyme catalyses 2'-deoxycytidine + H2O + H(+) = 2'-deoxyuridine + NH4(+). Functionally, this enzyme scavenges exogenous and endogenous cytidine and 2'-deoxycytidine for UMP synthesis. This Salmonella schwarzengrund (strain CVM19633) protein is Cytidine deaminase.